A 427-amino-acid polypeptide reads, in one-letter code: Tol-Pal system protein TolB (427 aa).

The signal sequence occupies residues 1 to 27; the sequence is MPVSLLRALLVFSLLCLGLSATRAAHA.

Belongs to the TolB family. As to quaternary structure, the Tol-Pal system is composed of five core proteins: the inner membrane proteins TolA, TolQ and TolR, the periplasmic protein TolB and the outer membrane protein Pal. They form a network linking the inner and outer membranes and the peptidoglycan layer.

It is found in the periplasm. In terms of biological role, part of the Tol-Pal system, which plays a role in outer membrane invagination during cell division and is important for maintaining outer membrane integrity. This is Tol-Pal system protein TolB from Thiobacillus denitrificans (strain ATCC 25259 / T1).